A 489-amino-acid chain; its full sequence is Inactive receptor-like serine/threonine-protein kinase At2g40270 (489 aa).

The first 23 residues, 1-23 (MLFKMRSFVAFVLLLSWFGSCCS), serve as a signal peptide directing secretion. Topologically, residues 24–139 (LKDQAVDFLK…PRNSHSSVPL (116 aa)) are extracellular. The segment at 67–130 (KDLPSRKDRK…SAPLANSPIP (64 aa)) is disordered. A compositionally biased stretch (low complexity) spans 81–90 (AATTTPSSSP). The segment covering 99–116 (TKASTVSEPQKRSSTQDV) has biased composition (polar residues). Positions 117–130 (SPSPSAPLANSPIP) are enriched in low complexity. A helical membrane pass occupies residues 140–160 (VVGCVGGAFFLLLVATGLYFF). Topologically, residues 161 to 489 (TSKAGKTVNP…WAELEVLSTA (329 aa)) are cytoplasmic. The region spanning 200 to 460 (EDFSNVIGSC…PTMQEVTGWL (261 aa)) is the Protein kinase domain.

The protein belongs to the protein kinase superfamily. Ser/Thr protein kinase family.

The protein resides in the cell membrane. The chain is Inactive receptor-like serine/threonine-protein kinase At2g40270 from Arabidopsis thaliana (Mouse-ear cress).